Here is a 136-residue protein sequence, read N- to C-terminus: Small cardioactive peptides (136 aa).

A signal peptide spans 1–24; the sequence is METSVSRVTVSLTLLVLIICSADA. Met-33 and Met-46 each carry methionine amide. The propeptide at 49-135 is carboxy-terminal peptide; it reads SQMKTETGTD…VLSKLKSLLQ (87 aa).

Belongs to the SCP family. Post-translationally, contains three disulfide bonds. In terms of tissue distribution, highly expressed in the buccal ganglion.

Its subcellular location is the secreted. In terms of biological role, involved in the stimulation of contractile activity in the gut, the increase of the amplitude of the heart beat, and enhancement of the contractile response of the radula closer muscle. This Aplysia californica (California sea hare) protein is Small cardioactive peptides.